We begin with the raw amino-acid sequence, 184 residues long: Ribosome-recycling factor (184 aa).

It belongs to the RRF family.

The protein localises to the cytoplasm. Functionally, responsible for the release of ribosomes from messenger RNA at the termination of protein biosynthesis. May increase the efficiency of translation by recycling ribosomes from one round of translation to another. This chain is Ribosome-recycling factor, found in Clostridium botulinum (strain Langeland / NCTC 10281 / Type F).